The primary structure comprises 119 residues: Gas vesicle protein O1 (119 aa).

Positions Met1–Glu12 are enriched in basic and acidic residues. Residues Met1–Ala48 form a disordered region. Residues Gly26–Thr42 show a composition bias toward polar residues.

Belongs to the gas vesicle GvpO family. In terms of assembly, forms homodimers, forms a GvpN1-GvpO1 heterodimer, interacts with GvpC1 (via the latter's C-terminus), GvpF1, GvpI1 and GvpL1, might interact with GvpA1.

Its subcellular location is the gas vesicle. It localises to the cytoplasm. A minor component of the gas vesicle, also found in soluble extracts. May play a role in transcription and/or RNA stability and in GV assembly. Gas vesicles are hollow, gas filled proteinaceous nanostructures found in several microbial planktonic microorganisms. They allow positioning of halobacteria at the optimal depth for growth in the poorly aerated, shallow brine pools of their habitat. Its function is as follows. Expression of a 9.5 kb p-vac DNA fragment containing 2 divergently transcribed regions (gvpD-gvpE-gvpF-gvpG-gvpH-gvpI-gvpJ-gvpK-gvpL-gvpM and gvpA-gvpC-gvpN-gvpO) allows H.volcanii to produce gas vesicles. A minimal gas vesicle can be made in H.volcanii by gvpA1-gvpO1 gvpF1-gvpG1-gvpJ1-gvpK1-gvpL1-gvpM1; lack of enough GvpJ1 prevents formation. The same region restores gas vesicle production in H.halobium without the p-vac locus, but it still has the c-vac locus. In Halobacterium salinarum (strain ATCC 700922 / JCM 11081 / NRC-1) (Halobacterium halobium), this protein is Gas vesicle protein O1.